Reading from the N-terminus, the 624-residue chain is MELPGSLCKKAKLGHGAQSWGMQRATNVTYQAHHVSRNKRGQVVGTRGGFRGCTVWLTGLSGAGKTTVSMALGEHLVCHGIPCYTLDGDNIRQGLNKNLGFSPEDREENVRRIAEVAKLFADAGLVCITSFISPYTQDRNNARQIHEGASLPFFEVFVDAPLHVCEQRDVKGLYKKARAGEIKGFTGIDSEYEKPEAPELVLKTDACDVNDCVQQVVELLQERDIVPVDASYEVKELYVPENKLHLAKTDAESLPALQINKVDMQWVQVLAEGWATPLGGFMREREYLQCLHFDCLLDGGVINLSVPIVLTATEEDKERLDGCTAFALIYEGRRVAILRNPEFFEHRKEERCARQWGTTCKSHPYIKMVMEQGDWLIGGDLQVLDRIYWNDGLDQYRLTPTELKQKFKDMNADAVFAFQLRNPVHNGHALLMQDTHRQLLERGYRRPVLLLHPLGGWTKDDDVPLMWRMKQHAAVLEEGILNPESTVVAIFPSPMMYAGPTGVQWHCRARMVAGANFYIVGRDPAGMPHPETGKDLYKPTHGAKVLTMAPGLITLEIVPFRVAAYNKRKKRMDYYDAEHHEDFEFISGTRMRRLAREGQKPPEGFMAPTAWAVLAEYYKALEKA.

Met1 is subject to N-acetylmethionine. The adenylyl-sulfate kinase stretch occupies residues 1 to 225 (MELPGSLCKK…VVELLQERDI (225 aa)). N6-acetyllysine is present on Lys12. 62 to 67 (GAGKTT) serves as a coordination point for ATP. Residues 89-92 (DNIR), Phe101, 106-109 (REEN), 132-133 (IS), Lys171, and 184-185 (GF) each bind adenosine 5'-phosphosulfate. ATP contacts are provided by residues Cys207, Cys212, 419–422 (QLRN), 521–525 (GRDPA), and Ala563. The sulfate adenylyltransferase stretch occupies residues 234–624 (VKELYVPENK…AEYYKALEKA (391 aa)).

The protein in the N-terminal section; belongs to the APS kinase family. It in the C-terminal section; belongs to the sulfate adenylyltransferase family. Homodimer.

The enzyme catalyses sulfate + ATP + H(+) = adenosine 5'-phosphosulfate + diphosphate. The catalysed reaction is adenosine 5'-phosphosulfate + ATP = 3'-phosphoadenylyl sulfate + ADP + H(+). It participates in sulfur metabolism; sulfate assimilation. Bifunctional enzyme with both ATP sulfurylase and APS kinase activity, which mediates two steps in the sulfate activation pathway. The first step is the transfer of a sulfate group to ATP to yield adenosine 5'-phosphosulfate (APS), and the second step is the transfer of a phosphate group from ATP to APS yielding 3'-phosphoadenylylsulfate (PAPS: activated sulfate donor used by sulfotransferase). In mammals, PAPS is the sole source of sulfate; APS appears to be only an intermediate in the sulfate-activation pathway. Required for normal biosynthesis of sulfated L-selectin ligands in endothelial cells. The protein is Bifunctional 3'-phosphoadenosine 5'-phosphosulfate synthase 1 (PAPSS1) of Cavia porcellus (Guinea pig).